The sequence spans 226 residues: Thioredoxin domain-containing protein 9 (226 aa).

The Thioredoxin domain occupies 75-180 (EIGSERDFFQ…TTETLEWRLG (106 aa)). 3 positions are modified to phosphoserine: Ser-188, Ser-221, and Ser-223.

Forms ternary complexes with the chaperonin TCP1 complex, spanning the cylindrical chaperonin cavity and contacting at least 2 subunits.

It is found in the cytoplasm. The protein localises to the nucleus. Its subcellular location is the cytoskeleton. It localises to the microtubule organizing center. The protein resides in the centrosome. It is found in the midbody. Its function is as follows. Significantly diminishes the chaperonin TCP1 complex ATPase activity, thus negatively impacts protein folding, including that of actin or tubulin. This is Thioredoxin domain-containing protein 9 (Txndc9) from Rattus norvegicus (Rat).